An 829-amino-acid chain; its full sequence is High affinity cAMP-specific and IBMX-insensitive 3',5'-cyclic phosphodiesterase 8A (829 aa).

The disordered stretch occupies residues 16 to 46; the sequence is EDAPSPAAPPLSSGGPRLPQGQKTAALPRTR. Residue Ser-20 is modified to Phosphoserine. Residues 213-283 form the PAS domain; it reads ACNSVFTALE…DTINSCIRIG (71 aa). The PAC domain occupies 287-329; it reads QGIYYAKKKNGDNIQQNVKIIPVIGQGGKIRHYVSIIRVCNGN. The interval 341–360 is disordered; the sequence is SDTHTDNQTGKHKDRRKGSL. Ser-359 is subject to Phosphoserine; by PKA. Residues Ser-386 and Ser-457 each carry the phosphoserine modification. Residues 454–461 form an involved in RAF1-binding region; the sequence is RRLSGNEY. Tyr-461 bears the Phosphotyrosine mark. The 341-residue stretch at 480–820 folds into the PDEase domain; the sequence is SLDDVPPRIA…KYWKGLDEMK (341 aa). The Proton donor role is filled by His-556. 4 residues coordinate a divalent metal cation: His-560, His-596, Asp-597, and Asp-726.

It belongs to the cyclic nucleotide phosphodiesterase family. PDE8 subfamily. In terms of assembly, interacts with RAF1. The interaction promotes RAF1 activity. Requires a divalent metal cation as cofactor. In terms of processing, phosphorylated at Ser-359 by PKA under elevated cAMP conditions, this enhances catalytic activity. As to expression, expressed in most tissues except thymus and peripheral blood leukocytes. Highest levels in testis, ovary, small intestine and colon.

The catalysed reaction is 3',5'-cyclic AMP + H2O = AMP + H(+). The protein operates within purine metabolism; 3',5'-cyclic AMP degradation; AMP from 3',5'-cyclic AMP: step 1/1. Inhibited by dipyridimole. Insensitive to selective PDE inhibitors including rolipram and zaprinast as well as to the non-selective inhibitor, IBMX. Unaffected by cGMP. Its function is as follows. Hydrolyzes the second messenger cAMP, which is a key regulator of many important physiological processes. May be involved in maintaining basal levels of the cyclic nucleotide and/or in the cAMP regulation of germ cell development. Binding to RAF1 reduces RAF1 'Ser-259' inhibitory-phosphorylation and stimulates RAF1-dependent EGF-activated ERK-signaling. Protects against cell death induced by hydrogen peroxide and staurosporine. The polypeptide is High affinity cAMP-specific and IBMX-insensitive 3',5'-cyclic phosphodiesterase 8A (PDE8A) (Homo sapiens (Human)).